Reading from the N-terminus, the 208-residue chain is Uracil phosphoribosyltransferase (208 aa).

5-phospho-alpha-D-ribose 1-diphosphate-binding positions include arginine 78, arginine 103, and 130 to 138 (DPMLATGGS). Residues isoleucine 193 and 198–200 (GDA) each bind uracil. Aspartate 199 contacts 5-phospho-alpha-D-ribose 1-diphosphate.

The protein belongs to the UPRTase family. The cofactor is Mg(2+).

The catalysed reaction is UMP + diphosphate = 5-phospho-alpha-D-ribose 1-diphosphate + uracil. Its pathway is pyrimidine metabolism; UMP biosynthesis via salvage pathway; UMP from uracil: step 1/1. Allosterically activated by GTP. Its function is as follows. Catalyzes the conversion of uracil and 5-phospho-alpha-D-ribose 1-diphosphate (PRPP) to UMP and diphosphate. The chain is Uracil phosphoribosyltransferase from Shewanella halifaxensis (strain HAW-EB4).